Here is an 822-residue protein sequence, read N- to C-terminus: Molybdenum cofactor sulfurase (822 aa).

Lysine 245 is modified (N6-(pyridoxal phosphate)lysine). Cysteine 412 is a catalytic residue. Residues 658–814 enclose the MOSC domain; that stretch reads LRLIRQSSND…LKTYSPIKAI (157 aa).

The protein belongs to the class-V pyridoxal-phosphate-dependent aminotransferase family. MOCOS subfamily. Pyridoxal 5'-phosphate is required as a cofactor.

The catalysed reaction is Mo-molybdopterin + L-cysteine + AH2 = thio-Mo-molybdopterin + L-alanine + A + H2O. The protein operates within cofactor biosynthesis; molybdopterin biosynthesis. In terms of biological role, sulfurates the molybdenum cofactor. Sulfation of molybdenum is essential for xanthine dehydrogenase (XDH) and aldehyde oxidase (ADO) enzymes in which molybdenum cofactor is liganded by 1 oxygen and 1 sulfur atom in active form. In Bombyx mori (Silk moth), this protein is Molybdenum cofactor sulfurase.